The sequence spans 818 residues: BDNF/NT-3 growth factors receptor (818 aa).

The first 31 residues, Met-1–Gly-31, serve as a signal peptide directing secretion. 2 disulfide bridges follow: Cys-32–Cys-38 and Cys-36–Cys-45. Topologically, residues Cys-32–Ser-426 are extracellular. Asn-66 carries N-linked (GlcNAc...) asparagine glycosylation. The stretch at Tyr-71–Leu-92 is one LRR 1 repeat. A glycan (N-linked (GlcNAc...) asparagine) is linked at Asn-94. One copy of the LRR 2 repeat lies at Leu-95–Leu-116. Asn-120 carries an N-linked (GlcNAc...) asparagine glycan. 2 disulfide bridges follow: Cys-151–Cys-175 and Cys-153–Cys-193. The Ig-like C2-type 1 domain maps to Pro-196–Thr-281. 7 N-linked (GlcNAc...) asparagine glycosylation sites follow: Asn-199, Asn-204, Asn-226, Asn-253, Asn-287, Asn-324, and Asn-337. Cysteines 217 and 265 form a disulfide. The 70-residue stretch at Thr-295–Asn-364 folds into the Ig-like C2-type 2 domain. Residues Cys-301 and Cys-344 are joined by a disulfide bond. The interval Gly-384 to Tyr-394 is provides specificity for BDNF as ligand versus NTF3 and NTF4. Residues Pro-400 to Val-418 are compositionally biased toward polar residues. Residues Pro-400–Asn-420 are disordered. An N-linked (GlcNAc...) asparagine glycan is attached at Asn-408. The chain crosses the membrane as a helical span at residues Ile-427 to Leu-450. Over Lys-451–Gly-818 the chain is Cytoplasmic. Residues Asn-469–Pro-494 are disordered. Residues Ser-481–Glu-491 show a composition bias toward polar residues. Tyr-512 bears the Phosphotyrosine; by autocatalysis mark. One can recognise a Protein kinase domain in the interval Ile-534–Leu-803. ATP is bound by residues Leu-540–Val-548 and Lys-568. Asp-672 serves as the catalytic Proton acceptor. Phosphotyrosine; by autocatalysis is present on residues Tyr-698, Tyr-702, Tyr-703, and Tyr-813.

The protein belongs to the protein kinase superfamily. Tyr protein kinase family. Insulin receptor subfamily. As to quaternary structure, exists in a dynamic equilibrium between monomeric (low affinity) and dimeric (high affinity) structures. Interacts (phosphorylated upon activation by BDNF) with SHC1; mediates SHC1 phosphorylation and activation. Interacts (phosphorylated upon activation by BDNF) with PLCG1 and/or PLCG2; mediates PLCG1 phosphorylation and activation. Interacts with SH2B1 and SH2B2. Interacts with NGFR; may regulate the ligand specificity of the receptor. Interacts with SORCS2; this interaction is important for normal targeting to post-synaptic densities in response to high-frequency stimulation. Interacts (phosphorylated upon ligand-binding) with SH2D1A; regulates NTRK2. Interacts with SQSTM1 and KIDINS220. Interacts (phosphorylated upon ligand-binding) with FRS2; activates the MAPK signaling pathway. Interacts with APPL1. Interacts with MAPK8IP3/JIP3 and KLC1; interaction with KLC1 is mediated by MAPK8IP3/JIP3. Post-translationally, ligand-mediated auto-phosphorylation. Detected in embryonic brain and orsal root ganglia.

The protein resides in the cell membrane. It localises to the endosome membrane. The protein localises to the cell projection. It is found in the axon. Its subcellular location is the dendrite. The protein resides in the cytoplasm. It localises to the perinuclear region. The protein localises to the postsynaptic density. It catalyses the reaction L-tyrosyl-[protein] + ATP = O-phospho-L-tyrosyl-[protein] + ADP + H(+). With respect to regulation, the neuronal activity and the influx of calcium positively regulate the kinase activity and the internalization of the receptor which are both important for active signaling. Regulated by NGFR that may control the internalization of the receptor. NGFR may also stimulate the activation by BDNF compared to NTF3 and NTF4. The formation of active receptors dimers able to fully transduce the ligand-mediated signal, may be negatively regulated by the formation of inactive heterodimers with the non-catalytic isoforms. In terms of biological role, receptor tyrosine kinase involved in the development and the maturation of the central and the peripheral nervous systems through regulation of neuron survival, proliferation, migration, differentiation, and synapse formation and plasticity. Receptor for BDNF/brain-derived neurotrophic factor and NTF4/neurotrophin-4. Alternatively can also bind NTF3/neurotrophin-3 which is less efficient in activating the receptor but regulates neuron survival through NTRK2. Upon ligand-binding, undergoes homodimerization, autophosphorylation and activation. Recruits, phosphorylates and/or activates several downstream effectors including SHC1, FRS2, SH2B1, SH2B2 and PLCG1 that regulate distinct overlapping signaling cascades. Through SHC1, FRS2, SH2B1, SH2B2 activates the GRB2-Ras-MAPK cascade that regulates for instance neuronal differentiation including neurite outgrowth. Through the same effectors controls the Ras-PI3 kinase-AKT1 signaling cascade that mainly regulates growth and survival. Through PLCG1 and the downstream protein kinase C-regulated pathways controls synaptic plasticity. Thereby, plays a role in learning and memory by regulating both short term synaptic function and long-term potentiation. PLCG1 also leads to NF-Kappa-B activation and the transcription of genes involved in cell survival. Hence, it is able to suppress anoikis, the apoptosis resulting from loss of cell-matrix interactions. May also play a role in neutrophin-dependent calcium signaling in glial cells and mediate communication between neurons and glia. In Gallus gallus (Chicken), this protein is BDNF/NT-3 growth factors receptor (NTRK2).